The following is a 76-amino-acid chain: uncharacterized protein (76 aa).

Residues 1–15 (MYLPLLLFCVISCYG) form the signal peptide.

This is an uncharacterized protein from Magallana gigas (Pacific oyster).